We begin with the raw amino-acid sequence, 245 residues long: 8-amino-3,8-dideoxy-manno-octulosonate cytidylyltransferase (245 aa).

This sequence belongs to the KdsB family.

It is found in the cytoplasm. It catalyses the reaction 8-amino-3,8-dideoxy-alpha-D-manno-octulosonate + CTP = CMP-8-amino-3,8-dideoxy-alpha-D-manno-oct-2-ulosonate + diphosphate. It functions in the pathway bacterial outer membrane biogenesis; lipopolysaccharide biosynthesis. Its function is as follows. Activates KDO8N (a required 8-carbon sugar) for incorporation into bacterial lipopolysaccharide in the Shewanella genus. The protein is 8-amino-3,8-dideoxy-manno-octulosonate cytidylyltransferase of Shewanella woodyi (strain ATCC 51908 / MS32).